We begin with the raw amino-acid sequence, 315 residues long: Taste receptor type 2 member 3 (315 aa).

The Extracellular portion of the chain corresponds to 1 to 5; it reads MGLTE. A helical membrane pass occupies residues 6 to 26; sequence GLFLILSGTQFALGILVNCFI. Residues 27–41 lie on the Cytoplasmic side of the membrane; sequence GLVNGSSWFKTKRMS. Residues 42–62 traverse the membrane as a helical segment; that stretch reads LSDFIITTLAFLRIILLCIIL. Topologically, residues 63–93 are extracellular; that stretch reads TDSFLIEFSPNAHDSGVIMQIIDVSWTFTNH. The helical transmembrane segment at 94 to 114 threads the bilayer; sequence LSIWLATCLGVLYCLKIASFS. The Cytoplasmic portion of the chain corresponds to 115-127; the sequence is HPTFLWLKWRVSR. A helical membrane pass occupies residues 128–148; it reads VMVWMLLGVLLLSCGSTASLI. The Extracellular portion of the chain corresponds to 149-185; sequence NEFKLYSVFRGIEATXNVTEHFRKKRSEYYLIHVLGT. An N-linked (GlcNAc...) asparagine glycan is attached at Asn-165. Residues 186-206 traverse the membrane as a helical segment; it reads LWYLPPLIVSLAAYFLLIFSL. Over 207 to 233 the chain is Cytoplasmic; that stretch reads GRHTRQMLQNGTSSRDPSTEAHKRAIR. Residues 234–254 traverse the membrane as a helical segment; sequence IILSSFFLFLLYFLAFLIASF. At 255 to 265 the chain is on the extracellular side; sequence GNFLPKTKMAK. A helical transmembrane segment spans residues 266 to 286; sequence MIGEVMTMFYPAGHSFILILG. Residues 287–315 lie on the Cytoplasmic side of the membrane; it reads NSKLKQTFVEMLRCESGHLKPGSKGPIFS.

This sequence belongs to the G-protein coupled receptor T2R family.

The protein localises to the membrane. Its function is as follows. Gustducin-coupled receptor implicated in the perception of bitter compounds in the oral cavity and the gastrointestinal tract. Signals through PLCB2 and the calcium-regulated cation channel TRPM5. This is Taste receptor type 2 member 3 (TAS2R3) from Pongo pygmaeus (Bornean orangutan).